The following is a 329-amino-acid chain: 2-oxoglutarate-dependent dioxygenase mpl2 (329 aa).

The Fe2OG dioxygenase domain maps to 183–288 (PACPLRLLHY…RYSVVFFFDG (106 aa)). Fe cation contacts are provided by His211, Asp213, and His269. Position 279 (Arg279) interacts with 2-oxoglutarate.

The protein belongs to the iron/ascorbate-dependent oxidoreductase family. Requires Fe(2+) as cofactor.

It participates in mycotoxin biosynthesis. Its function is as follows. 2-oxoglutarate-dependent dioxygenase; part of the gene cluster that mediates the biosynthesis of the mycotoxin citrinin, a hepato-nephrotoxic compound to humans due to inhibition of respiration complex III. The pathway begins with the synthesis of a keto-aldehyde intermediate by the citrinin PKS (pksCT) from successive condensations of 4 malonyl-CoA units, presumably with a simple acetyl-CoA starter unit. Release of the keto-aldehyde intermediate is consistent with the presence of the C-terminal reductive release domain. Mp11 collaborates with pksCT by catalyzing the hydrolysis of ACP-bound acyl intermediates to free the ACP from stalled intermediates. Mpl2 then catalyzes the oxidation of the C-12 methyl of the ketone intermediate to an alcohol intermediate which is further oxidized by the oxidoreductase mpl7 to produce a bisaldehyde intermediate. The fourth catalytic step is catalyzed by the mpl4 aldehyde dehydrogenase. The final transformation is the reduction of C-3 by mpl6 to provide the chemically stable citrinin nucleus. This chain is 2-oxoglutarate-dependent dioxygenase mpl2, found in Monascus purpureus (Red mold).